Reading from the N-terminus, the 207-residue chain is Thymidylate kinase (207 aa).

Residue 12–19 (GVDGAGKS) participates in ATP binding.

Belongs to the thymidylate kinase family.

The catalysed reaction is dTMP + ATP = dTDP + ADP. Phosphorylation of dTMP to form dTDP in both de novo and salvage pathways of dTTP synthesis. This is Thymidylate kinase from Bordetella petrii (strain ATCC BAA-461 / DSM 12804 / CCUG 43448).